Consider the following 316-residue polypeptide: L-lactate dehydrogenase (316 aa).

Residues V15, D37, K42, Y68, and 82–83 (GL) contribute to the NAD(+) site. Substrate is bound by residues Q85, R91, and 123–126 (NPVD). NAD(+)-binding positions include 121–123 (ASN) and T146. 151–154 (DTSR) provides a ligand contact to substrate. R156 and H171 together coordinate beta-D-fructose 1,6-bisphosphate. H178 serves as the catalytic Proton acceptor. At Y222 the chain carries Phosphotyrosine. Residue T231 coordinates substrate.

This sequence belongs to the LDH/MDH superfamily. LDH family. As to quaternary structure, homotetramer.

It is found in the cytoplasm. The enzyme catalyses (S)-lactate + NAD(+) = pyruvate + NADH + H(+). The protein operates within fermentation; pyruvate fermentation to lactate; (S)-lactate from pyruvate: step 1/1. Allosterically activated by fructose 1,6-bisphosphate (FBP). Its function is as follows. Catalyzes the conversion of lactate to pyruvate. The protein is L-lactate dehydrogenase of Borrelia hermsii (strain HS1 / DAH).